A 599-amino-acid polypeptide reads, in one-letter code: Sulfite reductase [NADPH] flavoprotein alpha-component (599 aa).

Residues 64–202 form the Flavodoxin-like domain; that stretch reads ITIISASQTG…AASEWRARVV (139 aa). FMN-binding positions include 70-75, 117-120, and 153-162; these read SQTGNA, STQG, and LGDSSYEFFC. The 215-residue stretch at 234–448 folds into the FAD-binding FR-type domain; that stretch reads DAPLVASLSV…IEHNDNFRLP (215 aa). FAD is bound by residues Thr322, Ala356, 386–389, 404–406, Tyr410, and 419–422; these read RLYS, TVG, and GGAS. NADP(+)-binding positions include 519-520, 525-529, and Asp561; these read SR and KVYVQ. Tyr599 provides a ligand contact to FAD.

It belongs to the NADPH-dependent sulphite reductase flavoprotein subunit CysJ family. This sequence in the N-terminal section; belongs to the flavodoxin family. The protein in the C-terminal section; belongs to the flavoprotein pyridine nucleotide cytochrome reductase family. In terms of assembly, alpha(8)-beta(8). The alpha component is a flavoprotein, the beta component is a hemoprotein. Requires FAD as cofactor. It depends on FMN as a cofactor.

The enzyme catalyses hydrogen sulfide + 3 NADP(+) + 3 H2O = sulfite + 3 NADPH + 4 H(+). It functions in the pathway sulfur metabolism; hydrogen sulfide biosynthesis; hydrogen sulfide from sulfite (NADPH route): step 1/1. Its function is as follows. Component of the sulfite reductase complex that catalyzes the 6-electron reduction of sulfite to sulfide. This is one of several activities required for the biosynthesis of L-cysteine from sulfate. The flavoprotein component catalyzes the electron flow from NADPH -&gt; FAD -&gt; FMN to the hemoprotein component. The polypeptide is Sulfite reductase [NADPH] flavoprotein alpha-component (Escherichia coli O157:H7).